Consider the following 90-residue polypeptide: Acylphosphatase (90 aa).

The Acylphosphatase-like domain maps to 5 to 90 (SYLFNVKGKV…WQELTDFKMY (86 aa)). Catalysis depends on residues Arg20 and Asn38.

Belongs to the acylphosphatase family.

The catalysed reaction is an acyl phosphate + H2O = a carboxylate + phosphate + H(+). In Aliivibrio fischeri (strain ATCC 700601 / ES114) (Vibrio fischeri), this protein is Acylphosphatase (acyP).